Consider the following 843-residue polypeptide: Translation initiation factor IF-2 (843 aa).

The segment at 198 to 219 is disordered; it reads YKREEEEKKSKAKKAGGKGFKK. The span at 207–219 shows a compositional bias: basic residues; sequence SKAKKAGGKGFKK. The 168-residue stretch at 345–512 folds into the tr-type G domain; that stretch reads SRAPVVTIMG…AVLLQSEVLE (168 aa). The G1 stretch occupies residues 354-361; sequence GHVDHGKT. Position 354 to 361 (354 to 361) interacts with GTP; that stretch reads GHVDHGKT. Residues 379 to 383 are G2; that stretch reads GITQH. The interval 400–403 is G3; that stretch reads DTPG. Residues 400-404 and 454-457 each bind GTP; these read DTPGH and NKID. The segment at 454–457 is G4; that stretch reads NKID. The tract at residues 490-492 is G5; the sequence is SAK.

Belongs to the TRAFAC class translation factor GTPase superfamily. Classic translation factor GTPase family. IF-2 subfamily.

The protein localises to the cytoplasm. Functionally, one of the essential components for the initiation of protein synthesis. Protects formylmethionyl-tRNA from spontaneous hydrolysis and promotes its binding to the 30S ribosomal subunits. Also involved in the hydrolysis of GTP during the formation of the 70S ribosomal complex. This Francisella tularensis subsp. tularensis (strain WY96-3418) protein is Translation initiation factor IF-2.